A 463-amino-acid chain; its full sequence is Methionine aminopeptidase 2-2 (463 aa).

The interval 1–97 (MGSKSPEGHW…TLSVTELKQT (97 aa)) is disordered. A compositionally biased stretch (polar residues) spans 27–36 (DPQTSQNGSG). Over residues 46-57 (GDDDDDDEDAEE) the composition is skewed to acidic residues. Basic residues predominate over residues 69–85 (KKKKRKKSNKKKKKKTK). The segment covering 86–97 (SGTLSVTELKQT) has biased composition (polar residues). Position 215 (His-215) interacts with substrate. Positions 236, 247, and 316 each coordinate a divalent metal cation. A substrate-binding site is contributed by His-324. A divalent metal cation contacts are provided by Glu-349 and Glu-444.

This sequence belongs to the peptidase M24A family. Methionine aminopeptidase eukaryotic type 2 subfamily. Co(2+) serves as cofactor. It depends on Zn(2+) as a cofactor. Requires Mn(2+) as cofactor. The cofactor is Fe(2+).

Its subcellular location is the cytoplasm. The catalysed reaction is Release of N-terminal amino acids, preferentially methionine, from peptides and arylamides.. In terms of biological role, cotranslationally removes the N-terminal methionine from nascent proteins. The N-terminal methionine is often cleaved when the second residue in the primary sequence is small and uncharged (Met-Ala-, Cys, Gly, Pro, Ser, Thr, or Val). In Neosartorya fischeri (strain ATCC 1020 / DSM 3700 / CBS 544.65 / FGSC A1164 / JCM 1740 / NRRL 181 / WB 181) (Aspergillus fischerianus), this protein is Methionine aminopeptidase 2-2.